We begin with the raw amino-acid sequence, 131 residues long: Transcription antitermination protein NusB (131 aa).

The protein belongs to the NusB family.

In terms of biological role, involved in transcription antitermination. Required for transcription of ribosomal RNA (rRNA) genes. Binds specifically to the boxA antiterminator sequence of the ribosomal RNA (rrn) operons. This chain is Transcription antitermination protein NusB, found in Agathobacter rectalis (strain ATCC 33656 / DSM 3377 / JCM 17463 / KCTC 5835 / VPI 0990) (Eubacterium rectale).